Here is a 583-residue protein sequence, read N- to C-terminus: Dynein axonemal assembly factor 3 (583 aa).

Residues 455-534 (RGGGDSAVES…RADQIPPLEA (80 aa)) are disordered.

The protein belongs to the DNAAF3 family.

The protein localises to the cytoplasm. It localises to the dynein axonemal particle. Its function is as follows. Required for the assembly of axonemal inner and outer dynein arms. Involved in preassembly of dyneins into complexes before their transport into cilia. This is Dynein axonemal assembly factor 3 (Dnaaf3) from Rattus norvegicus (Rat).